We begin with the raw amino-acid sequence, 332 residues long: Ectoine dioxygenase (332 aa).

A compositionally biased stretch (polar residues) spans 1 to 10 (MSVQTSSNRP). The tract at residues 1 to 47 (MSVQTSSNRPLPQANLHIATETPEADSRIRSAPRPGQDPYPTRLSEP) is disordered. Residue Gln-163 participates in L-ectoine binding. Lys-169 contacts 2-oxoglutarate. The Fe cation site is built by His-180, Asp-182, and His-281.

It belongs to the PhyH family. EctD subfamily. Homodimer. Fe(2+) serves as cofactor.

The enzyme catalyses L-ectoine + 2-oxoglutarate + O2 = 5-hydroxyectoine + succinate + CO2. Functionally, involved in the biosynthesis of 5-hydroxyectoine, called compatible solute, which helps organisms to survive extreme osmotic stress by acting as a highly soluble organic osmolyte. Catalyzes the 2-oxoglutarate-dependent selective hydroxylation of L-ectoine to yield (4S,5S)-5-hydroxyectoine. This is Ectoine dioxygenase from Halomonas elongata (strain ATCC 33173 / DSM 2581 / NBRC 15536 / NCIMB 2198 / 1H9).